The sequence spans 907 residues: Translation initiation factor IF-2 (907 aa).

Residues 26–317 (DAGMKKSSSD…KPKSMQHGFD (292 aa)) are disordered. Basic and acidic residues-rich tracts occupy residues 28–44 (GMKK…EKQK) and 101–248 (SAIE…DTDY). Positions 299 to 308 (KGGRKGKLSK) are enriched in basic residues. The 170-residue stretch at 406–575 (PRAPVVTIMG…LLQAEVLELT (170 aa)) folds into the tr-type G domain. The segment at 415–422 (GHVDHGKT) is G1. 415 to 422 (GHVDHGKT) contributes to the GTP binding site. The segment at 440–444 (GITQH) is G2. The tract at residues 461–464 (DTPG) is G3. Residues 461 to 465 (DTPGH) and 515 to 518 (NKID) contribute to the GTP site. Residues 515–518 (NKID) form a G4 region. Residues 551-553 (SAK) are G5.

This sequence belongs to the TRAFAC class translation factor GTPase superfamily. Classic translation factor GTPase family. IF-2 subfamily.

Its subcellular location is the cytoplasm. One of the essential components for the initiation of protein synthesis. Protects formylmethionyl-tRNA from spontaneous hydrolysis and promotes its binding to the 30S ribosomal subunits. Also involved in the hydrolysis of GTP during the formation of the 70S ribosomal complex. This is Translation initiation factor IF-2 from Vibrio vulnificus (strain YJ016).